The primary structure comprises 547 residues: Mitogen-activated protein kinase 15 (547 aa).

The tract at residues 1-20 (MCAAEVDRHVSQRYLIKRRL) is ubiquitin-conjugating. The Protein kinase domain occupies 14-305 (YLIKRRLGKG…AEQALQHPYV (292 aa)). Residues 20–28 (LGKGAYGIV) and lysine 43 each bind ATP. Residue aspartate 138 is the Proton acceptor of the active site. Threonine 176 is subject to Phosphothreonine. The TXY motif lies at 176-178 (TEY). A Phosphotyrosine modification is found at tyrosine 178. The interval 266 to 286 (LDALLPPDTPPEALDLLKRLL) is necessary to interact with ESRRA, to regulate its subcellular localization and to inhibit its transcriptional activity. The interval 301-380 (QHPYVQRFHC…SQRQSLKPGV (80 aa)) is requires for interaction with GABARAP, MAP1LC3B AND GABARAPL1. A disordered region spans residues 370-503 (ASQRQSLKPG…EAPEPRPGRR (134 aa)). 2 PXXXP motif repeats span residues 378-382 (PGVLP) and 385-389 (LAETP). PXXXP motif; regulates binding with chromatin and interaction with PCNA repeat units lie at residues 393–397 (RGPKP) and 401–405 (HGHDP). Positions 401–414 (HGHDPEHVEVRRQS) are enriched in basic and acidic residues. Arginine 449 bears the Omega-N-methylarginine mark. Over residues 454 to 465 (SLTSQAAAQAAN) the composition is skewed to polar residues. The segment covering 481–490 (AVGARRVPSR) has biased composition (low complexity). A compositionally biased stretch (basic and acidic residues) spans 491-500 (LPREAPEPRP).

The protein belongs to the protein kinase superfamily. CMGC Ser/Thr protein kinase family. MAP kinase subfamily. As to quaternary structure, interacts with CSK/c-Src, ABL1, RET and TGFB1I1. Interacts with GABARAP, MAP1LC3B and GABARAPL1; controls, in a kinase-dependent fashion, both basal and starvation-induced autophagy. Interacts with ESRRA; promotes re-localization of ESRRA to the cytoplasm through a XPO1-dependent mechanism then inhibits ESRRA transcriptional activity. Interacts with PCNA; the interaction is chromatin binding- and kinase activity-dependent and prevents MDM2-mediated PCNA destruction by inhibiting the association of PCNA with MDM2. Interacts with DVL2. Interacts with CLIC3; MAPK15 does not phosphorylates CLIC3. Autophosphorylated on Thr-176 and Tyr-178; activates the enzyme. Post-translationally, dephosphorylated by PTPN1. In terms of processing, ubiquitinated. Ubiquitination may allow its tight kinase activity regulation and rapid turnover. May be ubiquitinated by a SCF E3 ligase. Ubiquitously expressed at a weak level. Highest expression is found in testis and to a lower extent in lung.

Its subcellular location is the cytoplasm. It is found in the cytoskeleton. The protein localises to the cilium basal body. The protein resides in the cell junction. It localises to the tight junction. Its subcellular location is the microtubule organizing center. It is found in the centrosome. The protein localises to the centriole. The protein resides in the cytoplasmic vesicle. It localises to the autophagosome. Its subcellular location is the golgi apparatus. It is found in the nucleus. The protein localises to the spindle. The catalysed reaction is L-seryl-[protein] + ATP = O-phospho-L-seryl-[protein] + ADP + H(+). It catalyses the reaction L-threonyl-[protein] + ATP = O-phospho-L-threonyl-[protein] + ADP + H(+). Its activity is regulated as follows. Activated by threonine and tyrosine phosphorylation. Inhibited by dual specificity phosphatases, such as DUSP1. Phosphorylation and activation in response to DNA damaging agents, serum stimulation. Constitutively activated when phosphorylated on Tyr-178. Activity depends on the relative rates of MAPK15 autophosphorylation and dephosphorylation by PTPN1. Its function is as follows. Atypical MAPK protein that regulates several process such as autophagy, ciliogenesis, protein trafficking/secretion and genome integrity, in a kinase activity-dependent manner. Controls both, basal and starvation-induced autophagy throught its interaction with GABARAP, MAP1LC3B and GABARAPL1 leading to autophagosome formation, SQSTM1 degradation and reduced MAP1LC3B inhibitory phosphorylation. Regulates primary cilium formation and the localization of ciliary proteins involved in cilium structure, transport, and signaling. Prevents the relocation of the sugar-adding enzymes from the Golgi to the endoplasmic reticulum, thereby restricting the production of sugar-coated proteins. Upon amino-acid starvation, mediates transitional endoplasmic reticulum site disassembly and inhibition of secretion. Binds to chromatin leading to MAPK15 activation and interaction with PCNA, that which protects genomic integrity by inhibiting MDM2-mediated degradation of PCNA. Regulates DA transporter (DAT) activity and protein expression via activation of RhoA. In response to H(2)O(2) treatment phosphorylates ELAVL1, thus preventing it from binding to the PDCD4 3'UTR and rendering the PDCD4 mRNA accessible to miR-21 and leading to its degradation and loss of protein expression. Also functions in a kinase activity-independent manner as a negative regulator of growth. Phosphorylates in vitro FOS and MBP. During oocyte maturation, plays a key role in the microtubule organization and mei- otic cell cycle progression in oocytes, fertilized eggs, and early embryos. Interacts with ESRRA promoting its re-localization from the nucleus to the cytoplasm and then prevents its transcriptional activity. The sequence is that of Mitogen-activated protein kinase 15 (Mapk15) from Rattus norvegicus (Rat).